Here is a 336-residue protein sequence, read N- to C-terminus: MTELYDVAIIGGGPVGMFTAFYAGLRDTKAVLVESLATLGGQVTSLYPEKKILDVAGFTGIKGSALIDSLDEQMKLFPIDIKTSTTVTNVTKTNDLFTVTINNGSSFQAKTIIITTGKGSFEPRKMQVSGVDQLVGQGIHYFVTNKHDFDNHDVAIAGGGDSAIDMATMLNEFTHSTRIIHRRDQFRAMEQSVKQLSQSSVIKETPKKVSQIEKQSDGKLKITLAQVKNDQVTNDICVDDLIINYGFISENKIVHGWDIQPENEGQAFSVDQAMQTTIPGVFAIGDASHYEGKADLIAVGFGEAPTAVNAAIRFFDPQRRGPGHSSSMVIQDGKLI.

FAD contacts are provided by E34, Q42, Y47, V87, F121, D286, and S326.

Belongs to the ferredoxin--NADP reductase type 2 family. Homodimer. Requires FAD as cofactor.

The enzyme catalyses 2 reduced [2Fe-2S]-[ferredoxin] + NADP(+) + H(+) = 2 oxidized [2Fe-2S]-[ferredoxin] + NADPH. The sequence is that of Ferredoxin--NADP reductase from Leuconostoc mesenteroides subsp. mesenteroides (strain ATCC 8293 / DSM 20343 / BCRC 11652 / CCM 1803 / JCM 6124 / NCDO 523 / NBRC 100496 / NCIMB 8023 / NCTC 12954 / NRRL B-1118 / 37Y).